We begin with the raw amino-acid sequence, 188 residues long: MSTMFADTLLIVFISVCTALLAEGITWVLVYRTDKYKRLKAEVEKQSKKLEKKKETITESAGRQQKKKIERQEEKLKNNNRDLSMVRMKSMFAIGFCFTALMGMFNSIFDGRVVAKLPFTPLSYIQGLSHRNLLGDDTTDCSFIFLYILCTMSIRQNIQKILGLAPSRAATKQAGGFLGPPPPSGKFS.

Residues 1–4 (MSTM) lie on the Lumenal side of the membrane. Residues 5-32 (FADTLLIVFISVCTALLAEGITWVLVYR) form a helical membrane-spanning segment. A coiled-coil region spans residues 32–89 (RTDKYKRLKAEVEKQSKKLEKKKETITESAGRQQKKKIERQEEKLKNNNRDLSMVRMK). The Cytoplasmic portion of the chain corresponds to 33–86 (TDKYKRLKAEVEKQSKKLEKKKETITESAGRQQKKKIERQEEKLKNNNRDLSMV). Serine 60 is modified (phosphoserine). Residues 87–106 (RMKSMFAIGFCFTALMGMFN) form a helical membrane-spanning segment. The Lumenal segment spans residues 107 to 120 (SIFDGRVVAKLPFT). Residues 121–130 (PLSYIQGLSH) lie within the membrane without spanning it. Residues 131-140 (RNLLGDDTTD) are Lumenal-facing. The chain crosses the membrane as a helical span at residues 141 to 162 (CSFIFLYILCTMSIRQNIQKIL). The Cytoplasmic segment spans residues 163-188 (GLAPSRAATKQAGGFLGPPPPSGKFS). The residue at position 188 (serine 188) is a Phosphoserine.

This sequence belongs to the TMCO1 family. In terms of assembly, homodimer and homotetramer. Homodimer under resting conditions; forms homotetramers following ER calcium overload. Component of the GET- and EMC-like (GEL) complex, composed of RAB5IF/OPTI and TMCO1. The GEL complex is part of the multi-pass translocon (MPT) complex, composed of three subcomplexes, the GEL complex (composed of RAB5IF/OPTI and TMCO1), the BOS complex (composed of NCLN/Nicalin, NOMO1 and TMEM147) and the PAT complex (composed of WDR83OS/Asterix and CCDC47). The MPT complex associates with the SEC61 complex.

It is found in the endoplasmic reticulum membrane. It localises to the golgi apparatus membrane. The protein resides in the mitochondrion membrane. The enzyme catalyses Ca(2+)(in) = Ca(2+)(out). Its function is as follows. Endoplasmic reticulum (ER) calcium-selective channel preventing intracellular Ca2(+) stores from overfilling and maintaining calcium homeostasis in the ER. In response to endoplasmic reticulum (ER) Ca2(+) overloading, assembles into a homotetramer, forming a functional calcium-selective channel facilitating Ca2(+) release. Mediates ER Ca2(+) homeostasis in osteoblasts and plays a key role in bone formation, via the CaMKII-HDAC4-RUNX2 signaling axis. Component of the multi-pass translocon (MPT) complex that mediates insertion of multi-pass membrane proteins into the lipid bilayer of membranes. The MPT complex takes over after the SEC61 complex: following membrane insertion of the first few transmembrane segments of proteins by the SEC61 complex, the MPT complex occludes the lateral gate of the SEC61 complex to promote insertion of subsequent transmembrane regions. Within the MPT complex, the GEL subcomplex may mediate insertion of transmembrane regions into the membrane. The protein is Calcium load-activated calcium channel of Bos taurus (Bovine).